A 607-amino-acid chain; its full sequence is MASFSESLSQDPADAYKSAPSITKPMGPPSPGQPQWNPQRATSMPVFRYRPFAKEVEPIRLVDRTWPDRVIDCAPLWCAVDLRDGNQALIDPMSPICKRRMFDLLVRMGYKEIEVGFPSASQTDFDFVREIITDGTIPDDVTIQVLTQCRPELIERTFEACENASRVIVHFYNSTSILQRRVVFRADQATVKAIATDGARKCVEEAFKYPGTHWRFEYSPESYTGTELEYAKQVCDAVGEVIQPTPDNPIIFNLPATVEMATPNVYADSIEWMSRNLANRESVILSLHPHNDRGTAVAAAELGYHAGADRIEGCLFGNGERTGNVCLVTLGLNLFSRGVDPQIDFSNIDEIRRTVEYCNKLRVHERHPYGGDLVYTAFSGSHQDAINKGLDQMKIDADAADSDVDDILWQVPYLPIDPRDVGRTYEAVIRVNSQSGKGGVAYIMKADHGLELPRRLQIEFSRAIQKISEGEGGEITPTEMWDVFFEEYLSPVQPLERIKQRVNAAEEDGGSTSIAATVKINGEETEISGVGNGPLAAFIDALGHVGLQVAVLDYSEHAMNAGDDAQAAAYVEASVHGHTAWGVGIAPSITTASLRAVVSAVNRAMPR.

Residues 1 to 10 (MASFSESLSQ) show a composition bias toward polar residues. Residues 1–40 (MASFSESLSQDPADAYKSAPSITKPMGPPSPGQPQWNPQR) form a disordered region. One can recognise a Pyruvate carboxyltransferase domain in the interval 75–349 (PLWCAVDLRD…DPQIDFSNID (275 aa)). Aspartate 84, histidine 288, histidine 290, and asparagine 324 together coordinate Mg(2+). Residues 491–607 (PVQPLERIKQ…VSAVNRAMPR (117 aa)) are regulatory domain.

This sequence belongs to the alpha-IPM synthase/homocitrate synthase family. LeuA type 2 subfamily. In terms of assembly, homodimer. Mg(2+) is required as a cofactor.

Its subcellular location is the cytoplasm. It carries out the reaction 3-methyl-2-oxobutanoate + acetyl-CoA + H2O = (2S)-2-isopropylmalate + CoA + H(+). It participates in amino-acid biosynthesis; L-leucine biosynthesis; L-leucine from 3-methyl-2-oxobutanoate: step 1/4. In terms of biological role, catalyzes the condensation of the acetyl group of acetyl-CoA with 3-methyl-2-oxobutanoate (2-ketoisovalerate) to form 3-carboxy-3-hydroxy-4-methylpentanoate (2-isopropylmalate). This chain is 2-isopropylmalate synthase, found in Mycobacterium leprae (strain TN).